The primary structure comprises 99 residues: Integration host factor subunit alpha (99 aa).

Residues 49-75 (FGNFDLRDKNQRPGRNPKTGEDIPITA) are disordered.

It belongs to the bacterial histone-like protein family. Heterodimer of an alpha and a beta chain.

Its function is as follows. This protein is one of the two subunits of integration host factor, a specific DNA-binding protein that functions in genetic recombination as well as in transcriptional and translational control. This chain is Integration host factor subunit alpha, found in Salmonella arizonae (strain ATCC BAA-731 / CDC346-86 / RSK2980).